A 1233-amino-acid polypeptide reads, in one-letter code: uncharacterized protein (1233 aa).

Disordered stretches follow at residues 32-51 (SETSSTQPPPPEQGQETPKP), 510-529 (ATTNEEEPSQEVEESEPVPD), and 882-915 (EVIEEELIKDENEEEEDEDEEDEGDNKQRVIERS). Composition is skewed to acidic residues over residues 513-529 (NEEEPSQEVEESEPVPD) and 882-905 (EVIEEELIKDENEEEEDEDEEDEG). The span at 906–915 (DNKQRVIERS) shows a compositional bias: basic and acidic residues.

This is an uncharacterized protein from Dictyostelium discoideum (Social amoeba).